The following is a 643-amino-acid chain: Phosphoenolpyruvate carboxykinase [GTP] (643 aa).

Substrate contacts are provided by residues R102 and 253–255 (YGG). The Mn(2+) site is built by K262 and H282. A substrate-binding site is contributed by S304. 305–310 (ACGKTN) lines the GTP pocket. C306 is a catalytic residue. D329 is a Mn(2+) binding site. 422 to 424 (NSR) contacts substrate. GTP contacts are provided by residues R424, R455, and 548 to 551 (YGDN).

Belongs to the phosphoenolpyruvate carboxykinase [GTP] family. As to quaternary structure, monomer. Mn(2+) serves as cofactor.

The enzyme catalyses oxaloacetate + GTP = phosphoenolpyruvate + GDP + CO2. In parasitic nematodes PEPCK carboxylates phosphoenolpyruvate to oxaloacetate thus introducing the products of glycolysis to mitochondrial metabolism. In terms of biological role, catalyzes the conversion of oxaloacetate (OAA) to phosphoenolpyruvate (PEP), the rate-limiting step in the metabolic pathway that produces glucose from lactate and other precursors derived from the citric acid cycle. This Ascaris suum (Pig roundworm) protein is Phosphoenolpyruvate carboxykinase [GTP] (PEPCK).